We begin with the raw amino-acid sequence, 497 residues long: Lysine--tRNA ligase (497 aa).

The Mg(2+) site is built by E409 and E416.

The protein belongs to the class-II aminoacyl-tRNA synthetase family. In terms of assembly, homodimer. Requires Mg(2+) as cofactor.

It is found in the cytoplasm. It catalyses the reaction tRNA(Lys) + L-lysine + ATP = L-lysyl-tRNA(Lys) + AMP + diphosphate. The chain is Lysine--tRNA ligase from Streptococcus pyogenes serotype M49 (strain NZ131).